We begin with the raw amino-acid sequence, 419 residues long: Nodulation protein NoeE (419 aa).

In terms of biological role, required for the formation of sulfated nod factor. Proposed to transfer activated sulfate (PAPS) to the fucose of the nod factor. The protein is Nodulation protein NoeE (noeE) of Sinorhizobium fredii (strain NBRC 101917 / NGR234).